The primary structure comprises 502 residues: C2H2-type transcription factor MSN2 (502 aa).

2 C2H2-type zinc fingers span residues 385-408 and 414-436; these read FVCHLCTRRFRRQEHLKRHFRSLH and FACGECGKKFSRSDNLTQHSRIH.

The protein localises to the nucleus. Functionally, key downstream transcription factor in the HOG1-MAPK pathway. Plays crucial roles in the regulation of growth, conidiation, trap development and fatty acid metabolism. Negatively regulates secondary metabolism such as arthrobotrisins biosynthesis.Also regulates autophagy and endocytosis. The chain is C2H2-type transcription factor MSN2 from Arthrobotrys oligospora (strain ATCC 24927 / CBS 115.81 / DSM 1491) (Nematode-trapping fungus).